The following is a 132-amino-acid chain: Pre-histone-like nucleoprotein (132 aa).

Residues 2–23 (AILISPSNNTGWGLGTHKLFGG) constitute a propeptide that is removed on maturation. Positions 124–132 (RRKRRVRSK) match the Nuclear localization signal motif.

The protein belongs to the adenoviridae histone-like nucleoprotein family. As to quaternary structure, interacts with the core-capsid bridging protein; this interaction bridges the virus core to the capsid. Interacts with host NPM1; this interaction might play a role in placing the pre-histone-like nucleoprotein on the viral DNA or regulating viral gene expression. Interacts with host HMGB1; this interaction inhibits host immune response. Post-translationally, cleaved near the N-terminus by the viral protease during virion maturation to form the mature protein.

The protein resides in the virion. Its subcellular location is the host nucleus. It localises to the host nucleolus. In terms of biological role, plays a role in the inhibition of host immune response within the nucleus. Interacts with cellular nucleosomes and immobilizes the host immune danger signal HMGB1 on chromatin. In turn, prevents HMGB1 release out of the cell and thus decreases inflammation. Also plays a role in the wrapping and condensation of the viral DNA. May also promote viral genome import into the nucleus. In Canine adenovirus serotype 1 (strain RI261) (CAdV-1), this protein is Pre-histone-like nucleoprotein.